A 473-amino-acid polypeptide reads, in one-letter code: Photosystem II CP43 reaction center protein (473 aa).

The propeptide occupies 1–14 (MKTLYSLRRFYHVE). Residue Thr15 is modified to N-acetylthreonine. Thr15 is subject to Phosphothreonine. Transmembrane regions (helical) follow at residues 69–93 (LFEV…PHLA), 134–155 (LLGP…KDRN), 178–200 (KALY…RKIT), 255–275 (KPFA…LSYS), and 291–312 (WFNN…ASQA). Glu367 contributes to the [CaMn4O5] cluster binding site. Residues 447 to 471 (RARAAAAGFEKGIDRDFEPVLSMTP) form a helical membrane-spanning segment.

The protein belongs to the PsbB/PsbC family. PsbC subfamily. In terms of assembly, PSII is composed of 1 copy each of membrane proteins PsbA, PsbB, PsbC, PsbD, PsbE, PsbF, PsbH, PsbI, PsbJ, PsbK, PsbL, PsbM, PsbT, PsbX, PsbY, PsbZ, Psb30/Ycf12, at least 3 peripheral proteins of the oxygen-evolving complex and a large number of cofactors. It forms dimeric complexes. Binds multiple chlorophylls and provides some of the ligands for the Ca-4Mn-5O cluster of the oxygen-evolving complex. It may also provide a ligand for a Cl- that is required for oxygen evolution. PSII binds additional chlorophylls, carotenoids and specific lipids. serves as cofactor.

It localises to the plastid. The protein localises to the chloroplast thylakoid membrane. One of the components of the core complex of photosystem II (PSII). It binds chlorophyll and helps catalyze the primary light-induced photochemical processes of PSII. PSII is a light-driven water:plastoquinone oxidoreductase, using light energy to abstract electrons from H(2)O, generating O(2) and a proton gradient subsequently used for ATP formation. The chain is Photosystem II CP43 reaction center protein from Draba nemorosa (Woodland whitlowgrass).